Here is a 1342-residue protein sequence, read N- to C-terminus: MVYSYSEKKRIRKDFGKRPQVLDIPYLLSIQLDSFKKFTDQDPTGERGLEAAFRSVFPIKSFSGNSELQYVSYKLGEPVFDVKECQIRGVTYSAPLRVKLRMVLFDREAAPGTVKDIKEQEVYMGDIPLMTENGTFVINGTERVIVSQLHRSPGVFFDHDRGKTHSSGKVLYNARIIPYRGSWLDFEFDPKDALFVRIDRRRKLPATIILRALDFSTQDILDIFFERVDFTIKKDSLVMKLLPERLRGETASYDIKDAEGNIVVEKGRRITARHIRQLEKTNTTELEVPVEYIVGKIAAQDYIDPDTGEVLVTANNEIRLEDLAQLSLAGIKDISTLYINELDHGAYISDTLRIDSTTNRLEALVEIYRMMRPGEPPTKDAAEALFQNLFFSEERYDLSKVGRMKFNRRLEIADDVGTGVLSNDDIVAVMKKIIEIRNGNDEVDDIDHLGNRRIRSVGEMAENQFRVGLVRVERAVRERLSLGDLNELMPQDLINAKPISAAVKEFFGSSQLSQFMDQNNPLSEVTHKRRISALGPGGLTRERAGFEVRDVHPTHYGRLCPIETPEGPNIGLINSLATFARTNSYGFLETPYRKVVDGVVTDDVEYLSAIEEGRYVIAQANIELDGEGRILEEQVACRHKGESTFMRASDIQYMDVSPQQIISVAASLIPFLEHDDANRALMGANMQRQAVPTLRSEKPLVGTGIERALAVDSGVVVAAKRGGVIDYVDASRIVVKVNEDELRPGEAGIDIYNLTKYTRSNQNTCINQRPCCQVGDPIVRGDVLADGPSTDLGDLALGQNMRVAFMPWNGYNFEDSILISERVVQDDRFTTIHIQELSCIARDTKLGSEEITADIPNVGESALSKLDESGIVYIGAEVKGGDILVGKVTPKGETQLTPEEKLLRAIFGEKASDVKDSSLRVPNSVTGTVIDVQVFTRDGVEKDKRAIEIEEMHIAQARKDLSEEFKILEEGVLSRARNLLLAGGYTQAQLDAIPRKELLTQVIDDETKQTELEQLAEQHEELKADFDKKFEHKRRKITQGDDLAPGVLKIVKVYLAVKRTIQPGDKMAGRHGNKGVISKICPIEDMPYDEQGNPVDIVLNPLGVPSRMNIGQVLEVHMGAAAKGIGNRIQAMLEEQREVAELRGYIKQAYDLGETQQKVDIESFTDEEVIRLAKHLKDGLPTATPAFDGAKEKEIKQMLELAGLPTSGQLRLFDGRTGNAFEREVTVGYMYMLKLNHLVDDKMHARSTGSYSLVTQQPLGGKAQFGGQRFGEMEVWALEAYGAAYTLQEMLTVKSDDVNGRTQMYKNIVDGNHQMQPGMPESFNVLLKEIRSLGINIELDQE.

It belongs to the RNA polymerase beta chain family. The RNAP catalytic core consists of 2 alpha, 1 beta, 1 beta' and 1 omega subunit. When a sigma factor is associated with the core the holoenzyme is formed, which can initiate transcription.

The catalysed reaction is RNA(n) + a ribonucleoside 5'-triphosphate = RNA(n+1) + diphosphate. In terms of biological role, DNA-dependent RNA polymerase catalyzes the transcription of DNA into RNA using the four ribonucleoside triphosphates as substrates. This is DNA-directed RNA polymerase subunit beta from Shewanella amazonensis (strain ATCC BAA-1098 / SB2B).